Consider the following 150-residue polypeptide: MKKLTKVLLVAGSVAVLAACGSSKKDESAGQMFGGYSVQDLQQRYNTVYFGFDKYNIEGEYVQILDAHAAFLNATPATKVVVEGNTDERGTPEYNIALGQRRADAVKHYLSAKGVQAGQVSTVSYGEEKPAVLGHDEAAYSKNRRAVLAY.

An N-terminal signal peptide occupies residues 1–19 (MKKLTKVLLVAGSVAVLAA). A lipid anchor (N-palmitoyl cysteine) is attached at C20. C20 carries the S-diacylglycerol cysteine lipid modification. The region spanning 37–150 (SVQDLQQRYN…SKNRRAVLAY (114 aa)) is the OmpA-like domain.

Belongs to the Pal lipoprotein family. The Tol-Pal system is composed of five core proteins: the inner membrane proteins TolA, TolQ and TolR, the periplasmic protein TolB and the outer membrane protein Pal. They form a network linking the inner and outer membranes and the peptidoglycan layer.

It is found in the cell outer membrane. Part of the Tol-Pal system, which plays a role in outer membrane invagination during cell division and is important for maintaining outer membrane integrity. This chain is Peptidoglycan-associated lipoprotein, found in Pasteurella multocida (strain Pm70).